Reading from the N-terminus, the 382-residue chain is UDP-4-amino-4-deoxy-L-arabinose--oxoglutarate aminotransferase (382 aa).

Lys-183 carries the post-translational modification N6-(pyridoxal phosphate)lysine.

Belongs to the DegT/DnrJ/EryC1 family. ArnB subfamily. In terms of assembly, homodimer. Requires pyridoxal 5'-phosphate as cofactor.

It catalyses the reaction UDP-4-amino-4-deoxy-beta-L-arabinose + 2-oxoglutarate = UDP-beta-L-threo-pentopyranos-4-ulose + L-glutamate. It participates in nucleotide-sugar biosynthesis; UDP-4-deoxy-4-formamido-beta-L-arabinose biosynthesis; UDP-4-deoxy-4-formamido-beta-L-arabinose from UDP-alpha-D-glucuronate: step 2/3. Its pathway is bacterial outer membrane biogenesis; lipopolysaccharide biosynthesis. Its function is as follows. Catalyzes the conversion of UDP-4-keto-arabinose (UDP-Ara4O) to UDP-4-amino-4-deoxy-L-arabinose (UDP-L-Ara4N). The modified arabinose is attached to lipid A and is required for resistance to polymyxin and cationic antimicrobial peptides. This chain is UDP-4-amino-4-deoxy-L-arabinose--oxoglutarate aminotransferase, found in Pseudomonas aeruginosa (strain ATCC 15692 / DSM 22644 / CIP 104116 / JCM 14847 / LMG 12228 / 1C / PRS 101 / PAO1).